The sequence spans 312 residues: Olfactory receptor 51B5 (312 aa).

At 1–23 the chain is on the extracellular side; the sequence is MSSSGSSHPFLLTGFPGLEEAHH. The chain crosses the membrane as a helical span at residues 24-44; it reads WISVFFLFMYISILFGNGTLL. Residues 45-52 are Cytoplasmic-facing; sequence LLIKEDHN. A helical membrane pass occupies residues 53–73; sequence LHEPMYFFLAMLAATDLGLAL. The Extracellular segment spans residues 74-97; that stretch reads TTMPTVLGVLWLDHREIGSAACFS. Cysteines 95 and 187 form a disulfide. Residues 98–118 form a helical membrane-spanning segment; the sequence is QAYFIHSLSFLESGILLAMAY. Over 119–137 the chain is Cytoplasmic; that stretch reads DRFIAICNPLRYTSVLTNT. Residues 138–158 form a helical membrane-spanning segment; the sequence is RVVKIGLGVLMRGFVSVVPPI. The Extracellular portion of the chain corresponds to 159–194; sequence RPLYFFLYCHSHVLSHAFCLHQDVIKLACADTTFNR. Residues 195–215 form a helical membrane-spanning segment; that stretch reads LYPAVLVVFIFVLDYLIIFIS. The Cytoplasmic portion of the chain corresponds to 216-235; sequence YVLILKTVLSIASREERAKA. A helical transmembrane segment spans residues 236–256; that stretch reads LITCVSHICCVLVFYVTVIGL. Topologically, residues 257 to 271 are extracellular; that stretch reads SLIHRFGKQVPHIVH. The chain crosses the membrane as a helical span at residues 272-292; that stretch reads LIMSYAYFLFPPLMNPITYSV. Topologically, residues 293–312 are cytoplasmic; the sequence is KTKQIQNAILHLFTTHRIGT.

This sequence belongs to the G-protein coupled receptor 1 family.

Its subcellular location is the cell membrane. Odorant receptor. The chain is Olfactory receptor 51B5 (OR51B5) from Homo sapiens (Human).